The chain runs to 163 residues: Small heat shock protein C1 (163 aa).

Residues 55–163 (MFYESSSIKS…EQDAKEITIN (109 aa)) form the sHSP domain.

The protein belongs to the small heat shock protein (HSP20) family.

In Rickettsia typhi (strain ATCC VR-144 / Wilmington), this protein is Small heat shock protein C1 (hspC1).